The chain runs to 606 residues: Mitogen-activated protein kinase kinase kinase 7 (606 aa).

The tract at residues 1–300 (MSTASAASSS…FPGADEPLQY (300 aa)) is interaction with MAPK8IP1. In terms of domain architecture, Protein kinase spans 36-291 (IEVEEVVGRG…KIMTHLMRYF (256 aa)). Residues 42-50 (VGRGAFGVV) and Lys-63 contribute to the ATP site. Residue Lys-72 forms a Glycyl lysine isopeptide (Lys-Gly) (interchain with G-Cter in ubiquitin) linkage. Asp-156 (proton acceptor) is an active-site residue. A Glycyl lysine isopeptide (Lys-Gly) (interchain with G-Cter in ubiquitin) cross-link involves residue Lys-158. Thr-184 and Thr-187 each carry (Microbial infection) O-acetylthreonine; by Yersinia YopJ; alternate. Residues Thr-184 and Thr-187 each carry the phosphothreonine; by autocatalysis; alternate modification. Ser-192 bears the Phosphoserine; by autocatalysis mark. Residue Lys-209 forms a Glycyl lysine isopeptide (Lys-Gly) (interchain with G-Cter in ubiquitin) linkage. Positions 301 to 338 (PCQYSDEGQSNSATSTGSFMDIASTNTSNKSDTNMEQV) are disordered. Polar residues predominate over residues 306 to 338 (DEGQSNSATSTGSFMDIASTNTSNKSDTNMEQV). Thr-341 carries the (Microbial infection) O-acetylthreonine; by Yersinia YopJ; alternate modification. Residues 354 to 391 (KNQAKQQSESGRLSLGASRGSSVESLPPTSEGKRMSAD) form a disordered region. Over residues 361-375 (SESGRLSLGASRGSS) the composition is skewed to low complexity. A phosphoserine mark is found at Ser-367, Ser-389, and Ser-439. Residues 443–452 (LTVTGTEPGQ) are compositionally biased toward polar residues. Residues 443 to 493 (LTVTGTEPGQVSSRSSSPSVRMITTSGPTSEKPTRSHPWTPDDSTDTNGSD) form a disordered region. (Microbial infection) O-acetylthreonine; by Yersinia YopJ; alternate is present on residues Thr-444, Thr-446, and Thr-448. A compositionally biased stretch (low complexity) spans 453 to 463 (VSSRSSSPSVR). Phosphoserine is present on Ser-455. The segment covering 464–473 (MITTSGPTSE) has biased composition (polar residues). Thr-467 carries the post-translational modification (Microbial infection) O-acetylthreonine; by Yersinia YopJ; alternate.

Belongs to the protein kinase superfamily. STE Ser/Thr protein kinase family. MAP kinase kinase kinase subfamily. As to quaternary structure, can form homodimer. Binds both upstream activators and downstream substrates in multimolecular complexes. Interacts with TAB1/MAP3K7IP1, TAB2/MAP3K7IP2 and TAB3/MAP3K7IP3. Identified in the TRIKA2 complex composed of MAP3K7/TAK1, TAB1/MAP3K7IP1 and TAB2/MAP3K7IP2. Interacts with PPM1L and PPM1B/PP2CB. Interaction with PP2A and PPP6C leads to its repressed activity. Interacts with TRAF6 and TAB1/MAP3K7IP1; during IL-1 signaling. Interacts with TAOK1 and TAOK2; interaction with TAOK2 interferes with MAP3K7 interaction with IKKA, thus preventing NF-kappa-B activation. Interacts with DYNC2I2 (via WD domains). Interacts with CYLD and RBCK1. Interacts with TGFBR1; induces MAP3K7/TAK1 activation by TRAF6. Interacts with MAPK8IP1 and SMAD6. Interacts with isoform 1 of VRK2. Interacts with DAB2; the interaction is induced by TGF-beta stimulation and may mediate TGF-beta stimulated JNK activation. Interacts with TRIM5. Part of a complex containing ITCH, NDFIP1 and MAP3K7. Interacts with IFIT5; the interaction synergizes the recruitment of IKK to MAP3K7 and enhances IKK phosphorylation. Interacts with PLEKHM1 (via N- and C-terminus). Interacts with TRIM8. Found in a complex with SH3RF1, RAC2, MAP2K7/MKK7, MAPK8IP1/JIP1, MAPK8/JNK1 and MAPK9/JNK2. Interacts with SASH1. Interacts with RIPK1. (Microbial infection) Interacts with herpes simplex virus 2 protein US2; this interaction induces MAP3K7 phosphorylation and subsequent activation. Mg(2+) serves as cofactor. In terms of processing, association with TAB1/MAP3K7IP1 promotes autophosphorylation at Ser-192 and subsequent activation. Association with TAB2/MAP3K7IP2, itself associated with free unanchored Lys-63 polyubiquitin chain, promotes autophosphorylation and subsequent activation of MAP3K7. Dephosphorylation at Ser-192 by PPM1B/PP2CB and at Thr-187 by PP2A and PPP6C leads to inactivation. Post-translationally, 'Lys-48'-linked polyubiquitination at Lys-72 is induced by TNFalpha, and leads to proteasomal degradation. Undergoes 'Lys-48'-linked polyubiquitination catalyzed by ITCH. Requires 'Lys-63'-linked polyubiquitination for autophosphorylation and subsequent activation. 'Lys-63'-linked ubiquitination does not lead to proteasomal degradation. Deubiquitinated by CYLD, a protease that selectively cleaves 'Lys-63'-linked ubiquitin chains. Deubiquitinated by Y.enterocolitica YopP. Deubiquitinated by USP19; leading to negative regulation of TNF-alpha- and IL-1beta-triggered NF-kappa-B activation. (Microbial infection) Cleaved and inactivated by the proteases 3C of coxsackievirus A16 and human enterovirus D68, allowing the virus to disrupt TRAF6-triggered NF-kappa-B induction. In terms of processing, (Microbial infection) Acetylation of Thr-184 and Thr-187 by Yersinia YopJ prevents phosphorylation and activation, thus blocking the MAPK signaling pathway. As to expression, isoform 1A is the most abundant in ovary, skeletal muscle, spleen and blood mononuclear cells. Isoform 1B is highly expressed in brain, kidney and small intestine. Isoform 1C is the major form in prostate. Isoform 1D is the less abundant form.

It is found in the cytoplasm. The protein localises to the cell membrane. It catalyses the reaction L-seryl-[protein] + ATP = O-phospho-L-seryl-[protein] + ADP + H(+). It carries out the reaction L-threonyl-[protein] + ATP = O-phospho-L-threonyl-[protein] + ADP + H(+). Activated by pro-inflammatory cytokines and in response to physical and chemical stresses, including osmotic stress, oxidative stress, arsenic and ultraviolet light irradiation. Activated by 'Lys-63'-linked polyubiquitination and by autophosphorylation. Association with TAB1/MAP3K7IP1 and TAB2/MAP3K7IP2 promotes activation through autophosphorylation, whereas PPM1B/PP2CB, PP2A and PPP6C dephosphorylation leads to inactivation. Ceramides are also able to activate MAP3K7/TAK1. Its function is as follows. Serine/threonine kinase which acts as an essential component of the MAP kinase signal transduction pathway. Plays an important role in the cascades of cellular responses evoked by changes in the environment. Mediates signal transduction of TRAF6, various cytokines including interleukin-1 (IL-1), transforming growth factor-beta (TGFB), TGFB-related factors like BMP2 and BMP4, toll-like receptors (TLR), tumor necrosis factor receptor CD40 and B-cell receptor (BCR). Once activated, acts as an upstream activator of the MKK/JNK signal transduction cascade and the p38 MAPK signal transduction cascade through the phosphorylation and activation of several MAP kinase kinases like MAP2K1/MEK1, MAP2K3/MKK3, MAP2K6/MKK6 and MAP2K7/MKK7. These MAP2Ks in turn activate p38 MAPKs and c-jun N-terminal kinases (JNKs); both p38 MAPK and JNK pathways control the transcription factors activator protein-1 (AP-1). Independently of MAP2Ks and p38 MAPKs, acts as a key activator of NF-kappa-B by promoting activation of the I-kappa-B-kinase (IKK) core complex. Mechanistically, recruited to polyubiquitin chains of RIPK2 and IKBKG/NEMO via TAB2/MAP3K7IP2 and TAB3/MAP3K7IP3, and catalyzes phosphorylation and activation of IKBKB/IKKB component of the IKK complex, leading to NF-kappa-B activation. In osmotic stress signaling, plays a major role in the activation of MAPK8/JNK1, but not that of NF-kappa-B. Promotes TRIM5 capsid-specific restriction activity. Phosphorylates RIPK1 at 'Ser-321' which positively regulates RIPK1 interaction with RIPK3 to promote necroptosis but negatively regulates RIPK1 kinase activity and its interaction with FADD to mediate apoptosis. Phosphorylates STING1 in response to cGAMP-activation, promoting association between STEEP1 and STING1 and STING1 translocation to COPII vesicles. This chain is Mitogen-activated protein kinase kinase kinase 7, found in Homo sapiens (Human).